A 135-amino-acid polypeptide reads, in one-letter code: ATP synthase epsilon chain (135 aa).

Belongs to the ATPase epsilon chain family. F-type ATPases have 2 components, CF(1) - the catalytic core - and CF(0) - the membrane proton channel. CF(1) has five subunits: alpha(3), beta(3), gamma(1), delta(1), epsilon(1). CF(0) has three main subunits: a, b and c.

The protein resides in the cell inner membrane. Produces ATP from ADP in the presence of a proton gradient across the membrane. The protein is ATP synthase epsilon chain of Bradyrhizobium sp. (strain ORS 278).